Here is a 968-residue protein sequence, read N- to C-terminus: MRRAKSRRGPCEPVLRAPPPICYSPSSPVQILEDPAYFYPDLQLYSGRHEASTLTVEASGGLRGKSVEDPLSSFHSPNFLRTPEVEMRGSEDVASGRVLQRLIQEQLRYGTPTENMNLLAIQHQATGSAGPAHATTNFSSTETLTQEDPQMVYQSARQEPQGQEHQGDNTVMEKQVRSTQPQQNNEELPTYEEAKAQSQFFRGQQQQQQQQQQQQQQQQQQGQGPLSHTYYMAGGTSQKSRTEGRPTVNRANSGQAHKDEALKELKQGHVRSLSERIMQLSLERNGAKQHLPSSGNGKSFKAGGEPSPAQPVCKALDPRGPPPEYPFKTKPMKSPVSKNQDHGLYYNDQHPGVLHEMVKPYPAPQPARTEVAVLRYQPPPEYGVTSRPCQLPFPSTVQQHSPMSSQTSSIGGTLHSVSLPLPLPISLAASQPLPASPNQQLGPDAFAIVERAQQMVEILTEENRVLHQELQGCYDNADKLHKFEKELQSISEAYESLVKSTTKRESLDKAMRTKLEGEIRRLHDFNRDLRDRLETANRQLSSREYDGHEDKAAESHYVSQNKEFLKEKEKLEMELAAVRTASEDHRRHIEILDQALSNAQARVIKLEEELREKQAYVEKVEKLQQALTQLQSACEKRGQMERRLRTWLERELDALRTQQKHGTGPPVSLPECNAPALMELVREKEERILALEADMTKWEQKYLEESTIRHFAMSAAAAATAERDTTISNHSRNGSYGESSLEAHIWPEEEEVVQANRRCQDMEYTIKNLHAKIIEKDAMIKVLQQRSRKDAGKTDSASLRPARSVPSIAAATGTHSRQTSLTSSQLTEEKKEEKTTWKGSIGFLLGKEHQGQASAPLLPTTPASALSLPASTTSASSTHAKTGSKDSSTQTDKSTELFWPSMASLPSRGRLSTAPSNSPILKHPAAKGAVEKQENSPGHGKASEHRGRVSNLLHKPEFPDGEMMEVLI.

Composition is skewed to polar residues over residues 152-164 (VYQS…QGQE) and 177-187 (RSTQPQQNNEE). The disordered stretch occupies residues 152–258 (VYQSARQEPQ…NRANSGQAHK (107 aa)). The segment covering 203–224 (GQQQQQQQQQQQQQQQQQQGQG) has biased composition (low complexity). A phosphoserine mark is found at serine 253, serine 281, and serine 307. Positions 271–291 (RSLSERIMQLSLERNGAKQHL) form a coiled coil. Positions 285–343 (NGAKQHLPSSGNGKSFKAGGEPSPAQPVCKALDPRGPPPEYPFKTKPMKSPVSKNQDHG) are disordered. 2 coiled-coil regions span residues 449–645 (VERA…RRLR) and 676–705 (ALME…YLEE). The disordered stretch occupies residues 721–742 (AERDTTISNHSRNGSYGESSLE). Residues 726-738 (TISNHSRNGSYGE) are compositionally biased toward polar residues. Serine 731 bears the Phosphoserine mark. Positions 748–773 (EEEEVVQANRRCQDMEYTIKNLHAKI) form a coiled coil. Positions 785 to 834 (QRSRKDAGKTDSASLRPARSVPSIAAATGTHSRQTSLTSSQLTEEKKEEK) are disordered. 3 positions are modified to phosphoserine: serine 804, serine 816, and serine 840. Residues 853–878 (ASAPLLPTTPASALSLPASTTSASST) are compositionally biased toward low complexity. The tract at residues 853–956 (ASAPLLPTTP…GRVSNLLHKP (104 aa)) is disordered. 2 positions are modified to phosphoserine: serine 912 and serine 918. A PDZ-binding motif is present at residues 965–968 (EVLI).

Belongs to the angiomotin family. Post-translationally, polyubiquitinated by NEDD4, leading to proteasomal degradation. Expressed in exocrine glands, including pancreas, submandibular gland, lacrimal gland, parotid gland and sublingual gland (at protein level).

It is found in the cell junction. It localises to the tight junction. In terms of biological role, inhibits the Wnt/beta-catenin signaling pathway, probably by recruiting CTNNB1 to recycling endosomes and hence preventing its translocation to the nucleus. The sequence is that of Angiomotin-like protein 1 (Amotl1) from Mus musculus (Mouse).